The following is a 213-amino-acid chain: Orotate phosphoribosyltransferase (213 aa).

A 5-phospho-alpha-D-ribose 1-diphosphate-binding site is contributed by lysine 26. 34–35 (FF) is a binding site for orotate. Residues 72 to 73 (YK), arginine 99, lysine 100, lysine 103, histidine 105, and 124 to 132 (DDVITAGTA) each bind 5-phospho-alpha-D-ribose 1-diphosphate. Orotate-binding residues include threonine 128 and arginine 156.

Belongs to the purine/pyrimidine phosphoribosyltransferase family. PyrE subfamily. In terms of assembly, homodimer. The cofactor is Mg(2+).

It catalyses the reaction orotidine 5'-phosphate + diphosphate = orotate + 5-phospho-alpha-D-ribose 1-diphosphate. The protein operates within pyrimidine metabolism; UMP biosynthesis via de novo pathway; UMP from orotate: step 1/2. Functionally, catalyzes the transfer of a ribosyl phosphate group from 5-phosphoribose 1-diphosphate to orotate, leading to the formation of orotidine monophosphate (OMP). The chain is Orotate phosphoribosyltransferase from Pseudomonas putida (strain GB-1).